Reading from the N-terminus, the 179-residue chain is Large ribosomal subunit protein uL5 (179 aa).

This sequence belongs to the universal ribosomal protein uL5 family. Part of the 50S ribosomal subunit; part of the 5S rRNA/L5/L18/L25 subcomplex. Contacts the 5S rRNA and the P site tRNA. Forms a bridge to the 30S subunit in the 70S ribosome.

Functionally, this is one of the proteins that bind and probably mediate the attachment of the 5S RNA into the large ribosomal subunit, where it forms part of the central protuberance. In the 70S ribosome it contacts protein S13 of the 30S subunit (bridge B1b), connecting the 2 subunits; this bridge is implicated in subunit movement. Contacts the P site tRNA; the 5S rRNA and some of its associated proteins might help stabilize positioning of ribosome-bound tRNAs. In Shewanella baltica (strain OS223), this protein is Large ribosomal subunit protein uL5.